The primary structure comprises 212 residues: Thymidylate kinase (212 aa).

10–17 (GGEGSGKT) contacts ATP.

This sequence belongs to the thymidylate kinase family.

It carries out the reaction dTMP + ATP = dTDP + ADP. Phosphorylation of dTMP to form dTDP in both de novo and salvage pathways of dTTP synthesis. This chain is Thymidylate kinase, found in Marinomonas sp. (strain MWYL1).